The sequence spans 261 residues: MTHQTHAYHMVNPSPWPLTGALSALLLTSGLIMWFHFNSFLLVIIGLTCMLLTMYQWWRDIVREGTFQGHHTPVVQKGLRYGMVLFIVSEVFFFLGFFWAFYHSSLAPTPELGGCWPPTGIHPLNPLEVPLLNTSILLASGVSITWAHHSLMEGNRKQMIQALSITILLGIYFTILQASEYYESSFTISDGVYGSTFFVATGFHGLHVIIGTTFLIVCLLRQFNFHFTSTHHFGFEAAAWYWHFVDVVWLFLYVSIYWWGS.

At Met1–Pro15 the chain is on the mitochondrial matrix side. Residues Trp16–Trp34 traverse the membrane as a helical segment. Topologically, residues Phe35–Phe40 are mitochondrial intermembrane. A helical membrane pass occupies residues Leu41–Thr66. The Mitochondrial matrix portion of the chain corresponds to Phe67 to Thr72. A helical transmembrane segment spans residues Pro73–Ser105. Residues Leu106–Glu128 are Mitochondrial intermembrane-facing. The chain crosses the membrane as a helical span at residues Val129–Met152. The Mitochondrial matrix segment spans residues Glu153–Asn155. Residues Arg156 to Glu183 form a helical membrane-spanning segment. Residues Ser184–Asp190 are Mitochondrial intermembrane-facing. A helical transmembrane segment spans residues Gly191 to Phe223. Over Asn224–His232 the chain is Mitochondrial matrix. Residues Phe233–Ile256 form a helical membrane-spanning segment. The Mitochondrial intermembrane portion of the chain corresponds to Tyr257 to Ser261.

Belongs to the cytochrome c oxidase subunit 3 family. Component of the cytochrome c oxidase (complex IV, CIV), a multisubunit enzyme composed of 14 subunits. The complex is composed of a catalytic core of 3 subunits MT-CO1, MT-CO2 and MT-CO3, encoded in the mitochondrial DNA, and 11 supernumerary subunits COX4I, COX5A, COX5B, COX6A, COX6B, COX6C, COX7A, COX7B, COX7C, COX8 and NDUFA4, which are encoded in the nuclear genome. The complex exists as a monomer or a dimer and forms supercomplexes (SCs) in the inner mitochondrial membrane with NADH-ubiquinone oxidoreductase (complex I, CI) and ubiquinol-cytochrome c oxidoreductase (cytochrome b-c1 complex, complex III, CIII), resulting in different assemblies (supercomplex SCI(1)III(2)IV(1) and megacomplex MCI(2)III(2)IV(2)).

It is found in the mitochondrion inner membrane. The catalysed reaction is 4 Fe(II)-[cytochrome c] + O2 + 8 H(+)(in) = 4 Fe(III)-[cytochrome c] + 2 H2O + 4 H(+)(out). Functionally, component of the cytochrome c oxidase, the last enzyme in the mitochondrial electron transport chain which drives oxidative phosphorylation. The respiratory chain contains 3 multisubunit complexes succinate dehydrogenase (complex II, CII), ubiquinol-cytochrome c oxidoreductase (cytochrome b-c1 complex, complex III, CIII) and cytochrome c oxidase (complex IV, CIV), that cooperate to transfer electrons derived from NADH and succinate to molecular oxygen, creating an electrochemical gradient over the inner membrane that drives transmembrane transport and the ATP synthase. Cytochrome c oxidase is the component of the respiratory chain that catalyzes the reduction of oxygen to water. Electrons originating from reduced cytochrome c in the intermembrane space (IMS) are transferred via the dinuclear copper A center (CU(A)) of subunit 2 and heme A of subunit 1 to the active site in subunit 1, a binuclear center (BNC) formed by heme A3 and copper B (CU(B)). The BNC reduces molecular oxygen to 2 water molecules using 4 electrons from cytochrome c in the IMS and 4 protons from the mitochondrial matrix. The polypeptide is Cytochrome c oxidase subunit 3 (MT-CO3) (Osphranter robustus (Wallaroo)).